The primary structure comprises 268 residues: Protein c-ets-1-B (268 aa).

The tract at residues 131–139 is helix HI-1; it reads FKDYVRDRA. The helix HI-2 stretch occupies residues 150–157; sequence AAALAGYT. The ETS DNA-binding region spans 162-242; sequence IQLWQFLLEL…AGKRYVYRFV (81 aa). The helix H4 stretch occupies residues 245–249; sequence LQSLL. Residues 253-259 form a helix H5 region; that stretch reads PEELHAM.

The protein belongs to the ETS family. As to quaternary structure, binds DNA as a homodimer; homodimerization is required for transcription activation.

The protein resides in the nucleus. It is found in the cytoplasm. Autoinhibited by a module composed of four alpha helices (HI-1, HI-2, H4, and H5) that flank the DNA-binding ETS domain, reducing the affinity for DNA. Functionally, transcription factor. Directly controls the expression of cytokine and chemokine genes in a wide variety of different cellular contexts. The protein is Protein c-ets-1-B (ets1-b) of Xenopus laevis (African clawed frog).